The primary structure comprises 291 residues: MSLTFQAVIAKLNEFWADRGCLVAQPYDTEKGAGTMSPHTFLRAIGPEPWAVAYVEPCRRPTDGRYGENPNRFQHYYQYQVLIKPSPDNIQEIYLDSLRVLGINPEDHDIRFVEDNWESPTLGAWGVGWEVWLDGMEITQFTYFQQCGGIDCRPVAIEITYGLERLAMYLQDVEAINKIQWNENILYGDIFLQNEIEQCTYNFEASNPELLFSLFSLYEQEAKQLIDRSLVIPSLDYVLKCSHTFNLLDARGVIAVAERTRYIGRIRNLARQVAQLYLQQREALGFPLQTV.

Belongs to the class-II aminoacyl-tRNA synthetase family. In terms of assembly, tetramer of two alpha and two beta subunits.

It is found in the cytoplasm. The catalysed reaction is tRNA(Gly) + glycine + ATP = glycyl-tRNA(Gly) + AMP + diphosphate. This Microcystis aeruginosa (strain NIES-843 / IAM M-2473) protein is Glycine--tRNA ligase alpha subunit.